The following is a 657-amino-acid chain: Pentatricopeptide repeat-containing protein At2g37310 (657 aa).

15 PPR repeats span residues 21–55 (DGGA…SIKP), 56–86 (DNFL…ITVR), 87–121 (NAFS…SCYS), 128–165 (DSIS…GFDS), 166–196 (DVFV…MSER), 197–232 (DVVS…DFKP), 233–267 (NGVT…HIQM), 268–298 (DLSL…MSEK), 299–333 (DSVT…GLST), 334–364 (WNAM…GSRP), 365–399 (NTVT…GADN), 400–430 (NIYV…CKDR), 431–465 (SLIA…GTKP), 466–501 (DDVT…DIEP), and 502–536 (GVEH…PIAK). The tract at residues 537–612 (VWGALLNGAS…IPGTSWIETE (76 aa)) is type E motif. The segment at 613–643 (KGLRSFIAKDSSCERSKEMYEIIEGLVESMS) is type E(+) motif.

It belongs to the PPR family. PCMP-E subfamily.

The sequence is that of Pentatricopeptide repeat-containing protein At2g37310 (PCMP-E49) from Arabidopsis thaliana (Mouse-ear cress).